Here is a 255-residue protein sequence, read N- to C-terminus: Pimeloyl-[acyl-carrier protein] methyl ester esterase (255 aa).

An AB hydrolase-1 domain is found at 16 to 241 (LVLLHGWGLN…AAHAPFISHP (226 aa)). Substrate is bound by residues Trp22, 81–82 (SL), and 142–146 (FLALQ). The active-site Nucleophile is Ser81. Residues Asp206 and His234 contribute to the active site. Residue His234 coordinates substrate.

The protein belongs to the AB hydrolase superfamily. Carboxylesterase BioH family. As to quaternary structure, monomer.

The protein resides in the cytoplasm. The catalysed reaction is 6-carboxyhexanoyl-[ACP] methyl ester + H2O = 6-carboxyhexanoyl-[ACP] + methanol + H(+). Its pathway is cofactor biosynthesis; biotin biosynthesis. The physiological role of BioH is to remove the methyl group introduced by BioC when the pimeloyl moiety is complete. It allows to synthesize pimeloyl-ACP via the fatty acid synthetic pathway through the hydrolysis of the ester bonds of pimeloyl-ACP esters. Also displays a weak thioesterase activity. Can form a complex with CoA, and may be involved in the condensation of CoA and pimelic acid into pimeloyl-CoA, a precursor in biotin biosynthesis. This Serratia marcescens protein is Pimeloyl-[acyl-carrier protein] methyl ester esterase.